The sequence spans 270 residues: Regulatory protein RecX (270 aa).

It belongs to the RecX family.

It is found in the cytoplasm. Modulates RecA activity. The sequence is that of Regulatory protein RecX from Bacillus mycoides (strain KBAB4) (Bacillus weihenstephanensis).